The primary structure comprises 377 residues: Lipoyl synthase, mitochondrial (377 aa).

The [4Fe-4S] cluster site is built by C103, C108, C114, C134, C138, C141, and S349. Residues E119–L338 form the Radical SAM core domain.

Belongs to the radical SAM superfamily. Lipoyl synthase family. Requires [4Fe-4S] cluster as cofactor.

It is found in the mitochondrion. The enzyme catalyses [[Fe-S] cluster scaffold protein carrying a second [4Fe-4S](2+) cluster] + N(6)-octanoyl-L-lysyl-[protein] + 2 oxidized [2Fe-2S]-[ferredoxin] + 2 S-adenosyl-L-methionine + 4 H(+) = [[Fe-S] cluster scaffold protein] + N(6)-[(R)-dihydrolipoyl]-L-lysyl-[protein] + 4 Fe(3+) + 2 hydrogen sulfide + 2 5'-deoxyadenosine + 2 L-methionine + 2 reduced [2Fe-2S]-[ferredoxin]. Its pathway is protein modification; protein lipoylation via endogenous pathway; protein N(6)-(lipoyl)lysine from octanoyl-[acyl-carrier-protein]: step 2/2. Catalyzes the radical-mediated insertion of two sulfur atoms into the C-6 and C-8 positions of the octanoyl moiety bound to the lipoyl domains of lipoate-dependent enzymes, thereby converting the octanoylated domains into lipoylated derivatives. The protein is Lipoyl synthase, mitochondrial of Drosophila sechellia (Fruit fly).